The primary structure comprises 365 residues: Glucan endo-1,3-beta-glucosidase, basic vacuolar isoform (365 aa).

Residues 1 to 32 form the signal peptide; sequence MSTLHKHNTPQMAAITLLGLLLVASSIEIAGA. Catalysis depends on Glu-128, which acts as the Proton donor. Glu-273 serves as the catalytic Nucleophile. The propeptide at 349 to 365 is removed in mature form; it reads VSGSVETNATASLISEI. A glycan (N-linked (GlcNAc...) asparagine) is linked at Asn-356.

The protein belongs to the glycosyl hydrolase 17 family.

Its subcellular location is the vacuole. The catalysed reaction is Hydrolysis of (1-&gt;3)-beta-D-glucosidic linkages in (1-&gt;3)-beta-D-glucans.. Its function is as follows. Implicated in the defense of plants against pathogens. The sequence is that of Glucan endo-1,3-beta-glucosidase, basic vacuolar isoform (GN2) from Nicotiana plumbaginifolia (Leadwort-leaved tobacco).